We begin with the raw amino-acid sequence, 365 residues long: Succinyl-diaminopimelate desuccinylase (365 aa).

H65 contributes to the Zn(2+) binding site. D67 is a catalytic residue. Zn(2+) is bound at residue D96. The active-site Proton acceptor is E126. Zn(2+) contacts are provided by E127, E155, and H340.

It belongs to the peptidase M20A family. DapE subfamily. In terms of assembly, homodimer. The cofactor is Zn(2+). Requires Co(2+) as cofactor.

The catalysed reaction is N-succinyl-(2S,6S)-2,6-diaminopimelate + H2O = (2S,6S)-2,6-diaminopimelate + succinate. Its pathway is amino-acid biosynthesis; L-lysine biosynthesis via DAP pathway; LL-2,6-diaminopimelate from (S)-tetrahydrodipicolinate (succinylase route): step 3/3. Functionally, catalyzes the hydrolysis of N-succinyl-L,L-diaminopimelic acid (SDAP), forming succinate and LL-2,6-diaminopimelate (DAP), an intermediate involved in the bacterial biosynthesis of lysine and meso-diaminopimelic acid, an essential component of bacterial cell walls. This is Succinyl-diaminopimelate desuccinylase from Campylobacter jejuni subsp. doylei (strain ATCC BAA-1458 / RM4099 / 269.97).